The sequence spans 475 residues: Vasculin-like protein 1 (475 aa).

Residues S49 and S76 each carry the phosphoserine modification. 2 disordered regions span residues 92–115 (NLSG…GSTG) and 160–191 (PSLN…SAKQ). Position 202 is a phosphoserine (S202). Disordered regions lie at residues 237–271 (LVPK…EAAL) and 292–318 (PKES…RRTT). Residues 294-311 (ESPSSTTPPIEISSSRLT) show a composition bias toward low complexity. T300 is subject to Phosphothreonine. At S383 the chain carries Phosphoserine. The segment at 456–475 (CEDSDTETSSSETSDDDAWK) is disordered.

It belongs to the vasculin family.

It localises to the nucleus. Possible transcription factor. The chain is Vasculin-like protein 1 (Gpbp1l1) from Rattus norvegicus (Rat).